The chain runs to 257 residues: NAD-capped RNA hydrolase NudC (257 aa).

Residues K25 and R69 each coordinate substrate. Zn(2+) contacts are provided by C98 and C101. E111 contacts substrate. 2 residues coordinate Zn(2+): C116 and C119. Y124 contacts substrate. The region spanning 125-248 (PQIAPCIIVA…TVARRLIEDT (124 aa)) is the Nudix hydrolase domain. Positions 158, 174, and 178 each coordinate a divalent metal cation. Residues 159–180 (GFVEVGETLEQAVAREVMEESG) carry the Nudix box motif. Residue 192–199 (QPWPFPQS) coordinates substrate. E219 contributes to the a divalent metal cation binding site. A substrate-binding site is contributed by A241.

This sequence belongs to the Nudix hydrolase family. NudC subfamily. As to quaternary structure, homodimer. Requires Mg(2+) as cofactor. It depends on Mn(2+) as a cofactor. Zn(2+) is required as a cofactor.

It catalyses the reaction a 5'-end NAD(+)-phospho-ribonucleoside in mRNA + H2O = a 5'-end phospho-adenosine-phospho-ribonucleoside in mRNA + beta-nicotinamide D-ribonucleotide + 2 H(+). The enzyme catalyses NAD(+) + H2O = beta-nicotinamide D-ribonucleotide + AMP + 2 H(+). It carries out the reaction NADH + H2O = reduced beta-nicotinamide D-ribonucleotide + AMP + 2 H(+). MRNA decapping enzyme that specifically removes the nicotinamide adenine dinucleotide (NAD) cap from a subset of mRNAs by hydrolyzing the diphosphate linkage to produce nicotinamide mononucleotide (NMN) and 5' monophosphate mRNA. The NAD-cap is present at the 5'-end of some mRNAs and stabilizes RNA against 5'-processing. Has preference for mRNAs with a 5'-end purine. Catalyzes the hydrolysis of a broad range of dinucleotide pyrophosphates. The sequence is that of NAD-capped RNA hydrolase NudC from Escherichia coli O157:H7.